Here is a 108-residue protein sequence, read N- to C-terminus: UPF0060 membrane protein KPK_2870 (108 aa).

The next 4 membrane-spanning stretches (helical) occupy residues 6–26 (LLFF…WLWL), 29–49 (GATP…VWLL), 61–81 (AAYG…VDGV), and 86–106 (YDWA…AGWG).

Belongs to the UPF0060 family.

It localises to the cell inner membrane. The chain is UPF0060 membrane protein KPK_2870 from Klebsiella pneumoniae (strain 342).